The primary structure comprises 222 residues: Ras-related protein RabT1 (222 aa).

37-44 contributes to the GTP binding site; that stretch reads GDNKTGKS. An Effector region motif is present at residues 59-66; it reads VSSIGVDF. Residues 85-89 and 145-148 contribute to the GTP site; these read DVNSC and NKCD. Residue C219 is modified to Cysteine methyl ester. C219 carries S-geranylgeranyl cysteine lipidation. Residues 220–222 constitute a propeptide, removed in mature form; sequence NIL.

The protein belongs to the small GTPase superfamily. Rab family.

Its subcellular location is the cell membrane. The protein is Ras-related protein RabT1 (rabT1) of Dictyostelium discoideum (Social amoeba).